A 481-amino-acid chain; its full sequence is Small ribosomal subunit protein bS1 (481 aa).

S1 motif domains are found at residues 36–105 (GDIV…LSKK), 123–188 (DEAV…LSRR), 209–277 (GAIR…LSLK), and 294–363 (GQIV…LSLK). The segment at 437–465 (ATEEAGHGSSEQPPASSTPSAKATGGSLA) is disordered. Positions 445 to 457 (SSEQPPASSTPSA) are enriched in polar residues.

This sequence belongs to the bacterial ribosomal protein bS1 family.

Binds mRNA; thus facilitating recognition of the initiation point. It is needed to translate mRNA with a short Shine-Dalgarno (SD) purine-rich sequence. This is Small ribosomal subunit protein bS1 (rpsA) from Mycobacterium leprae (strain TN).